The chain runs to 213 residues: Ribosomal RNA small subunit methyltransferase G (213 aa).

Residues Gly75, Phe80, 128–129 (IE), and Arg144 contribute to the S-adenosyl-L-methionine site.

Belongs to the methyltransferase superfamily. RNA methyltransferase RsmG family.

The protein resides in the cytoplasm. The enzyme catalyses guanosine(527) in 16S rRNA + S-adenosyl-L-methionine = N(7)-methylguanosine(527) in 16S rRNA + S-adenosyl-L-homocysteine. Its function is as follows. Specifically methylates the N7 position of guanine in position 527 of 16S rRNA. The polypeptide is Ribosomal RNA small subunit methyltransferase G (Brucella ovis (strain ATCC 25840 / 63/290 / NCTC 10512)).